The sequence spans 320 residues: MEEVYKVVEGFYNQFEWEDIAKDLTPYKGIVFCGMGGSGIIGSFASKWLEHRSFNKPTFVVKDYTLPPFVDRDYLVFCISYSGNTEETLSNFEEAIGRGIKPLCITSNGKLMERAKEEGCEIYEVPKGFQPRYSLGFMLSKVLNLLGVDKDELEDAKENLKENLESLKQKGKEIANRIYGYIPVVYSTPLTAHIAERWKGQINENSKSPAYFTILPEMHHNEVMGWSNPELRNKFVYLLMFDEKDHHRVKLRVDITKKILEDFGVVPIMLKGEGNSYLARSLYLVHLADWVSVFLAELYGYDPVPVKTIERIKEELKKHA.

Residues 20 to 153 enclose the SIS domain; sequence IAKDLTPYKG…NLLGVDKDEL (134 aa). 6 residues coordinate D-fructose 6-phosphate: G37, S38, S80, S82, T85, and R132. Catalysis depends on E204, which acts as the Proton acceptor. D-fructose 6-phosphate is bound by residues H220 and K313. H220 acts as the Proton donor in catalysis. Residue K313 is the Proton acceptor of the active site.

Belongs to the PGI/PMI family. In terms of assembly, homodimer.

The catalysed reaction is alpha-D-glucose 6-phosphate = beta-D-fructose 6-phosphate. The enzyme catalyses D-mannose 6-phosphate = D-fructose 6-phosphate. In terms of biological role, dual specificity isomerase that catalyzes the isomerization of both glucose-6-phosphate and mannose-6-phosphate to fructose-6-phosphate. This chain is Bifunctional phosphoglucose/phosphomannose isomerase, found in Aquifex aeolicus (strain VF5).